We begin with the raw amino-acid sequence, 352 residues long: V-type ATP synthase subunit C (352 aa).

Belongs to the V-ATPase V0D/AC39 subunit family.

Its function is as follows. Produces ATP from ADP in the presence of a proton gradient across the membrane. The polypeptide is V-type ATP synthase subunit C (atpC) (Deinococcus radiodurans (strain ATCC 13939 / DSM 20539 / JCM 16871 / CCUG 27074 / LMG 4051 / NBRC 15346 / NCIMB 9279 / VKM B-1422 / R1)).